We begin with the raw amino-acid sequence, 495 residues long: GTPase Der (495 aa).

EngA-type G domains lie at 3–166 (PVVA…VQDE) and 208–381 (IKLA…SCAT). GTP contacts are provided by residues 9–16 (GRPNVGKS), 56–60 (DTGGI), 118–121 (NKTD), 214–221 (GRPNVGKS), 261–265 (DTAGV), and 326–329 (NKWD). Positions 382-466 (RRVSTAMLTR…PIRIQFKEGE (85 aa)) constitute a KH-like domain.

This sequence belongs to the TRAFAC class TrmE-Era-EngA-EngB-Septin-like GTPase superfamily. EngA (Der) GTPase family. As to quaternary structure, associates with the 50S ribosomal subunit.

GTPase that plays an essential role in the late steps of ribosome biogenesis. The sequence is that of GTPase Der from Pectobacterium atrosepticum (strain SCRI 1043 / ATCC BAA-672) (Erwinia carotovora subsp. atroseptica).